Reading from the N-terminus, the 260-residue chain is Imidazole glycerol phosphate synthase subunit HisF (260 aa).

Residues Asp-11 and Asp-130 contribute to the active site.

The protein belongs to the HisA/HisF family. As to quaternary structure, heterodimer of HisH and HisF.

The protein localises to the cytoplasm. The catalysed reaction is 5-[(5-phospho-1-deoxy-D-ribulos-1-ylimino)methylamino]-1-(5-phospho-beta-D-ribosyl)imidazole-4-carboxamide + L-glutamine = D-erythro-1-(imidazol-4-yl)glycerol 3-phosphate + 5-amino-1-(5-phospho-beta-D-ribosyl)imidazole-4-carboxamide + L-glutamate + H(+). It functions in the pathway amino-acid biosynthesis; L-histidine biosynthesis; L-histidine from 5-phospho-alpha-D-ribose 1-diphosphate: step 5/9. IGPS catalyzes the conversion of PRFAR and glutamine to IGP, AICAR and glutamate. The HisF subunit catalyzes the cyclization activity that produces IGP and AICAR from PRFAR using the ammonia provided by the HisH subunit. This is Imidazole glycerol phosphate synthase subunit HisF from Desulfatibacillum aliphaticivorans.